Consider the following 276-residue polypeptide: MTNVNAEIGRMVLAGGIETNLHDVGAGNPVVLVHGSGPGVTAWANWRTVMPELSRHRRVIAPDMVGFGFTQRPHGIHYGVESWVAHLAGILDALELDRVDLVGNSFGGALSLAFAIRFPHRVRRLVLMGAVGVSFELTDGLDAVWGYEPSVPNMRKVMDYFAYDRSLVSDELAELRYKASTRPGFQEAFASMFPAPRQRWVDALASSDQDIRDIRHETLILHGRDDRVIPLETSLRLNQLIEPSQLHVFGRCGHWVQIEQNRGFIRLVNDFLAAED.

The region spanning Asn28–Glu259 is the AB hydrolase-1 domain. Active-site residues include Ser105, Asp226, and His254.

This sequence belongs to the DmpD/TodF/XylF esterase family.

It catalyses the reaction (2Z,4E)-2-hydroxy-6-oxohepta-2,4-dienoate + H2O = (2Z)-2-hydroxypenta-2,4-dienoate + acetate + H(+). It functions in the pathway xenobiotic degradation; toluene degradation. Its function is as follows. Catalyzes the hydrolysis of 2-hydroxy-6-oxohepta-2,4-dienoate into 2-hydroxypenta-2,4-dienoate and acetate. This is 2-hydroxy-6-oxo-2,4-heptadienoate hydrolase (todF) from Pseudomonas putida (strain ATCC 700007 / DSM 6899 / JCM 31910 / BCRC 17059 / LMG 24140 / F1).